The sequence spans 128 residues: Sulfurtransferase TusD (128 aa).

Cys78 functions as the Cysteine persulfide intermediate in the catalytic mechanism.

It belongs to the DsrE/TusD family. In terms of assembly, heterohexamer, formed by a dimer of trimers. The hexameric TusBCD complex contains 2 copies each of TusB, TusC and TusD. The TusBCD complex interacts with TusE.

It is found in the cytoplasm. Functionally, part of a sulfur-relay system required for 2-thiolation of 5-methylaminomethyl-2-thiouridine (mnm(5)s(2)U) at tRNA wobble positions. Accepts sulfur from TusA and transfers it in turn to TusE. This is Sulfurtransferase TusD from Erwinia tasmaniensis (strain DSM 17950 / CFBP 7177 / CIP 109463 / NCPPB 4357 / Et1/99).